We begin with the raw amino-acid sequence, 665 residues long: UvrABC system protein B (665 aa).

A Helicase ATP-binding domain is found at 25-176 (NSIEKGNRFQ…NQRQLLRDLV (152 aa)). 38–45 (GATGTGKT) provides a ligand contact to ATP. The short motif at 91-114 (YYDYYQPEAYIPVSDTYIEKSASI) is the Beta-hairpin element. Residues 429-595 (QVDDLLGEIK…PIVTRSSNAI (167 aa)) enclose the Helicase C-terminal domain. Positions 626–661 (PELIGQLEEQMKEAAKKLEFEEAAKYRDRIQHLRDK) constitute a UVR domain.

This sequence belongs to the UvrB family. Forms a heterotetramer with UvrA during the search for lesions. Interacts with UvrC in an incision complex.

The protein localises to the cytoplasm. Its function is as follows. The UvrABC repair system catalyzes the recognition and processing of DNA lesions. A damage recognition complex composed of 2 UvrA and 2 UvrB subunits scans DNA for abnormalities. Upon binding of the UvrA(2)B(2) complex to a putative damaged site, the DNA wraps around one UvrB monomer. DNA wrap is dependent on ATP binding by UvrB and probably causes local melting of the DNA helix, facilitating insertion of UvrB beta-hairpin between the DNA strands. Then UvrB probes one DNA strand for the presence of a lesion. If a lesion is found the UvrA subunits dissociate and the UvrB-DNA preincision complex is formed. This complex is subsequently bound by UvrC and the second UvrB is released. If no lesion is found, the DNA wraps around the other UvrB subunit that will check the other stand for damage. The protein is UvrABC system protein B of Gloeothece citriformis (strain PCC 7424) (Cyanothece sp. (strain PCC 7424)).